The chain runs to 402 residues: MLQDRVSGSLSSSKISRCVLFLSLFCFFLLTMHASANRLQRVPNPGPSPAPEPKPCPSPGPNPAPATTKRTHNTTFPAIFAFGDSILDTGNNDYILTLIKANFLPYGMNFPDKVPTGRFCNGKIPSDFIADYIGVKPVVPAYLRPGLTQEDLLTGVSFASGGSGYDPLTPIVVSAIPMSKQLTYFQEYIEKVKGFVGKEKAEHIISKGLAIVVAGSDDLANTYYGEHLEEFLYDIDTYTSFMASSAASFAMQLYESGAKKIGFIGVSPIGCIPIQRTTRGGLKRKCADELNFAAQLFNSKLSTSLNELAKTMKNTTLVYIDIYSSFNDMIQNPKKYGFDEIDRGCCGTGLLELGPLCNKYTSLLCKNVSSFMFWDSYHPTERAYKILSQKFVENDMGPFYDN.

The N-terminal stretch at 1–35 (MLQDRVSGSLSSSKISRCVLFLSLFCFFLLTMHAS) is a signal peptide. The interval 41 to 69 (RVPNPGPSPAPEPKPCPSPGPNPAPATTK) is disordered. The span at 44-64 (NPGPSPAPEPKPCPSPGPNPA) shows a compositional bias: pro residues. Residue asparagine 73 is glycosylated (N-linked (GlcNAc...) asparagine). Serine 85 acts as the Nucleophile in catalysis. Residues asparagine 314 and asparagine 367 are each glycosylated (N-linked (GlcNAc...) asparagine). Active-site residues include aspartate 375 and histidine 378.

This sequence belongs to the 'GDSL' lipolytic enzyme family.

It is found in the secreted. This is GDSL esterase/lipase At1g20120 from Arabidopsis thaliana (Mouse-ear cress).